The following is a 373-amino-acid chain: Putative gustatory receptor 10b (373 aa).

At 1 to 8 (MRVGKLCR) the chain is on the cytoplasmic side. Residues 9 to 29 (LALRFWMGLILVLGFSSHYYN) traverse the membrane as a helical segment. Residues 30-82 (PTRRRLVYSRILQTYDWLLMVINLGAFYLYYRYAMTYFLEGMFRRQGFVNQVS) are Extracellular-facing. A helical membrane pass occupies residues 83-103 (TCNVFQQLLMAVTGTWLHFLF). Residues 104-132 (ERHVCQTYNELSRILKHDLKLKEHSRFYC) lie on the Cytoplasmic side of the membrane. A helical transmembrane segment spans residues 133-153 (LAFLAKVYNFFHNFNFALSAI). Residues 154–170 (MHWGLRPFNVWDLLANL) are Extracellular-facing. The chain crosses the membrane as a helical span at residues 171 to 191 (YFVYNSLARDAILVAYVLLLL). Over 192–230 (NLSEALRLNGQQEHDTYSDLMKQLRRRERLLRIGRRVHR) the chain is Cytoplasmic. A helical membrane pass occupies residues 231–251 (MFAWLVAIALIYLVFFNTATI). Residues 252–273 (YLGYTMFIQKHDALGLRGRGLK) lie on the Extracellular side of the membrane. A helical transmembrane segment spans residues 274 to 294 (MLLTVVSFLVILWDVVLLQVI). Residues 295–350 (CEKLLAEENKICDCPEDVASSRTTYRQWEMSALRRAITRSSPENNVLGMFRMDMRC) lie on the Cytoplasmic side of the membrane. A helical membrane pass occupies residues 351–371 (AFALISCSLSYGIIIIQIGYI). Residues 372–373 (PG) are Extracellular-facing.

Belongs to the insect chemoreceptor superfamily. Gustatory receptor (GR) family. Gr10a subfamily.

It localises to the cell membrane. Probable gustatory receptor which mediates acceptance or avoidance behavior, depending on its substrates. The polypeptide is Putative gustatory receptor 10b (Gr10b) (Drosophila melanogaster (Fruit fly)).